Here is a 462-residue protein sequence, read N- to C-terminus: tRNA modification GTPase MnmE (462 aa).

(6S)-5-formyl-5,6,7,8-tetrahydrofolate contacts are provided by Arg-27, Glu-89, and Arg-128. One can recognise a TrmE-type G domain in the interval 224–383 (GLATAIVGRP…LDERIAKLFF (160 aa)). Asn-234 serves as a coordination point for K(+). Residues 234–239 (NVGKSS), 253–259 (TDVAGTT), and 278–281 (DTAG) contribute to the GTP site. Ser-238 serves as a coordination point for Mg(2+). K(+)-binding residues include Thr-253, Val-255, and Thr-258. Mg(2+) is bound at residue Thr-259. Position 462 (Lys-462) interacts with (6S)-5-formyl-5,6,7,8-tetrahydrofolate.

This sequence belongs to the TRAFAC class TrmE-Era-EngA-EngB-Septin-like GTPase superfamily. TrmE GTPase family. Homodimer. Heterotetramer of two MnmE and two MnmG subunits. It depends on K(+) as a cofactor.

The protein resides in the cytoplasm. Functionally, exhibits a very high intrinsic GTPase hydrolysis rate. Involved in the addition of a carboxymethylaminomethyl (cmnm) group at the wobble position (U34) of certain tRNAs, forming tRNA-cmnm(5)s(2)U34. The protein is tRNA modification GTPase MnmE of Lacticaseibacillus paracasei (strain ATCC 334 / BCRC 17002 / CCUG 31169 / CIP 107868 / KCTC 3260 / NRRL B-441) (Lactobacillus paracasei).